The primary structure comprises 203 residues: Short chain dehydrogenase/reductase dpmpH (203 aa).

3 residues coordinate NADP(+): Asp23, Tyr77, and Lys81. Tyr77 serves as the catalytic Proton acceptor. Lys81 functions as the Lowers pKa of active site Tyr in the catalytic mechanism.

The protein belongs to the short-chain dehydrogenases/reductases (SDR) family.

It participates in secondary metabolite biosynthesis; terpenoid biosynthesis. Its function is as follows. Short chain dehydrogenase/reductase; part of the gene cluster that mediates the biosynthesis of diterpenoid pyrones. The first step of the pathway is the synthesis of the alpha-pyrone moiety by the polyketide synthase dpmpA via condensation of one acetyl-CoA starter unit with 3 malonyl-CoA units and 2 methylations. The alpha-pyrone is then combined with geranylgeranyl pyrophosphate (GGPP) formed by the GGPP synthase dpmpD through the action of the prenyltransferase dpmpC to yield a linear alpha-pyrone diterpenoid. Subsequent steps in the diterpenoid pyrone biosynthetic pathway involve the decalin core formation, which is initiated by the epoxidation of the C10-C11 olefin by the FAD-dependent oxidoreductase dpmpE, and is followed by a cyclization cascade catalyzed by the terpene cyclase dpmpB. The short chain dehydrogenase/reductase dpmpG then oxidizes the 8S hydroxy group to a ketone and the short chain dehydrogenase/reductase dpmpH reduces the ketone to the 8R hydroxy group to yield higginsianin B. Higginsianin B is further methylated by the methyltransferase dpmpI to produce the intermediate named FDDP B. The cytochrome P450 monooxygenase dpmpJ then oxidizes the C-26 methyl to primary alcohol, producing the final diterpenoid pyrone with a C-26 primary alcohol on the gamma-pyrone moiety named FDDP C. This chain is Short chain dehydrogenase/reductase dpmpH, found in Macrophomina phaseolina (strain MS6) (Charcoal rot fungus).